The chain runs to 306 residues: Uricase (306 aa).

Active-site charge relay system residues include lysine 5 and threonine 65. Positions 65, 66, 175, 192, 240, 241, and 267 each coordinate urate. Positions 281–306 (AKVLREPPRPTGYQQFSMDRSDLEEQ) are disordered.

Belongs to the uricase family.

The catalysed reaction is urate + O2 + H2O = 5-hydroxyisourate + H2O2. The protein operates within purine metabolism; urate degradation; (S)-allantoin from urate: step 1/3. In terms of biological role, catalyzes the oxidation of uric acid to 5-hydroxyisourate, which is further processed to form (S)-allantoin. In Halalkalicoccus jeotgali (strain DSM 18796 / CECT 7217 / JCM 14584 / KCTC 4019 / B3), this protein is Uricase.